The sequence spans 1257 residues: Insulin receptor substrate 4 (1257 aa).

The PH domain maps to 78–199; it reads EVCKRGYLRK…WYLLLSRLIL (122 aa). An IRS-type PTB domain is found at 231 to 335; that stretch reads YKDVWQVIVK…EKMRALCADE (105 aa). Disordered regions lie at residues 406–653, 678–921, and 1179–1257; these read VAHS…GGRF, IPEG…SSDY, and QDVA…KRGR. A compositionally biased stretch (basic residues) spans 408–424; sequence HSRRGRLHLPRGRRSRR. A YXXM motif 1 motif is present at residues 487-490; that stretch reads YMPM. The segment covering 495-509 has biased composition (gly residues); that stretch reads SGNGRGSGGGQGSNG. Residues 510–524 show a composition bias toward low complexity; it reads QGSSSHSSGGNQCSG. Composition is skewed to gly residues over residues 525 to 542 and 551 to 599; these read EGQG…GSGG and GTAG…SGKG. The span at 627–640 shows a compositional bias: pro residues; that stretch reads MPPPPPPPPPPPPA. Positions 641–650 are enriched in gly residues; that stretch reads GGTGGKGKSG. Residues 678–800 form a CRK-binding region; sequence IPEGAARGPH…KNPRNPQGGS (123 aa). Short sequence motifs (YXXM motif) lie at residues 700-703, 717-720, and 743-746; these read YVPM, YMPM, and YMMM. The span at 750–761 shows a compositional bias: pro residues; the sequence is VSPPPAPSPPKA. Over residues 763–774 the composition is skewed to basic and acidic residues; sequence DTNKEDDSKDND. The YXXM motif 5 signature appears at 779 to 782; that stretch reads YMFM. Residues 800-810 are compositionally biased toward low complexity; that stretch reads SSSKSWSSYFS. Polar residues predominate over residues 815–826; sequence FRSSPLGQNDNS. The short motif at 828–831 is the YXXM motif 6 element; it reads YVPM. Positions 840 to 855 are enriched in basic and acidic residues; sequence GLDKEVSYNWDPKDAA. Residues 895–897 form a GRB2-binding region; sequence ITK. Tyr921 bears the Phosphotyrosine mark. The YXXM motif 7 motif lies at 921-924; it reads YVNM. Residues 1236–1257 are compositionally biased toward basic and acidic residues; it reads DTHVRMDFARRDNQFDSPKRGR.

As to quaternary structure, interacts with SOCS6 in response to stimulation with either insulin or IGF1. Interacts with CRK and CRKL. Interaction with CRK is stronger than with CRKL. Interacts with CRK via the phosphorylated YXXM motifs. Interacts with GRB2 and PIK3R1. Interacts with PLC-gamma, SHC1, PTK6, PPP4C and NISCH. Interacts with ASB4; this interaction promotes IRS4 proteasomal degradation. Post-translationally, phosphorylated on tyrosine residues in response to both insulin and IGF1 signaling. Phosphorylated on Tyr-921 in response to FGF2 signaling. Phosphorylation of Tyr-921 is required for GRB2, phospholipase C-gamma and phosphatidylinositol 3-kinase interaction. In terms of processing, ubiquitinated in a ASB4-dependent manner, leading to proteasomal degradation. In terms of tissue distribution, expressed in myoblasts. Expressed in liver and hepatocellular carcinoma.

Its subcellular location is the cell membrane. Its function is as follows. Acts as an interface between multiple growth factor receptors possessing tyrosine kinase activity, such as insulin receptor, IGF1R and FGFR1, and a complex network of intracellular signaling molecules containing SH2 domains. Involved in the IGF1R mitogenic signaling pathway. Promotes the AKT1 signaling pathway and BAD phosphorylation during insulin stimulation without activation of RPS6KB1 or the inhibition of apoptosis. Interaction with GRB2 enhances insulin-stimulated mitogen-activated protein kinase activity. May be involved in nonreceptor tyrosine kinase signaling in myoblasts. Plays a pivotal role in the proliferation/differentiation of hepatoblastoma cell through EPHB2 activation upon IGF1 stimulation. May play a role in the signal transduction in response to insulin and to a lesser extent in response to IL4 and GH on mitogenesis. Plays a role in growth, reproduction and glucose homeostasis. May act as negative regulators of the IGF1 signaling pathway by suppressing the function of IRS1 and IRS2. The protein is Insulin receptor substrate 4 (IRS4) of Homo sapiens (Human).